Reading from the N-terminus, the 58-residue chain is uncharacterized protein (58 aa).

Residues 12-32 (VALVYISVYFFSCISLIVYFF) traverse the membrane as a helical segment.

The protein resides in the membrane. This is an uncharacterized protein from Saccharomyces cerevisiae (strain ATCC 204508 / S288c) (Baker's yeast).